Reading from the N-terminus, the 1224-residue chain is MREGSFPRRTRLLCLLAAVVLISTVTSFNIDTKNVVLHHMANNYFGYSLDFYNEQKGMPVLVVGAPEAETTNPNLSGIRRPGAVYACSVNRPTCREVHVDKMKGNLKKLNGSHLVPIEDKAYQFFGATVKSNDKHDKLLMCAPKYKYFYSKFEVIEPVGTCFYAENGFEKTEEFSSCKQEPARHGRHRLGYGQCGFSGAIPGKKNQDRVFLGAPGVWYWQGAIFSQNTKNQTDRPNTEYGSKEYDHDMMGYATATGDFDGDGIDDIVAGVPRGNDLHGKLVLYTSKLKMMINLTDEVSTQHGQYCGGALAVADVNKDGRDDIIMGCPFYTDYGSVKDAKTQERKPQYDVGKVIVFLQTAPGVFGKQLAVVGDDQWGRFGHSLAAAGDLNLDGYNDVIVGAPYAGKNKQGAVYVIHGSKDGVREKPTQKIEASQIGHGTARAFGFAVAGGVDVDGNGMPDIAVGAWKSGNAAVLLTKPVVTVTGATEPESALINVEEKNCDVDGKLGKQACRHINTCFKYEGKGDTPNDLEFDLRFNLDDHSPEPRAYFLQKDVKSDRSIKVASGSKTRDHPSSIEQRVRLEKGRQKCFRHRFFASSTMKDKLSPIHWSVNYTYVESKSGKLRGDKLEPAIDTTVPLSFQNKINIANNCGKDDLCVPDLKVTAVADREKFLLGTQDNTMLINVTVQNGGEDSYETKLYFDVPQGFEYGGIESVGADGSAPACSPTSDEPDSDGKWTFACDLGNPLPANKVVSSVVRVTASSDKPPLAPISINAHVNSSNDEEAHTIADNKVTFTIPVDFKNQLSLNGRSNPEQVDFSMTNKTRSDVFDDNEIGPVVSHLYQISNRGPSEIDAATLDIFWPSFSTEGGHLLYIITEPVVNPPNKGRCRVKQLQNVNPLNLRITNEHVPTEPPVAKTPNEYSREEDDESYEDETTTQSQTHHQTRTEHTQHHQGPVHVYERDEDKIRQNTGNWQYVEDKKKKGDYEYIPDDQEYDGDDFEDDDEDFDRAGSKRVKRAPVPKKKKKEGSRSGEPRSDKARFSDLREAVKLSKEAGGVVDYKGPLSRASVDCNGLRCTHIECDIYDLKEDEFVLVEIFSRLYTNTLVDERNPGGDISSLALARVTSTKYNWPHKPTLITAVSTNMNAIASEEGRDLPWWLYLLAILIGLAILILLILLLWRCGFFKRNRPPTEHAELRAEKQPAAHYADTQSRYAPQDQYSQGRHGQML.

The N-terminal stretch at 1 to 27 is a signal peptide; the sequence is MREGSFPRRTRLLCLLAAVVLISTVTS. Residues 28-1153 are Extracellular-facing; the sequence is FNIDTKNVVL…ASEEGRDLPW (1126 aa). FG-GAP repeat units lie at residues 29–96, 110–173, 180–235, 236–292, 293–347, 364–423, and 427–490; these read NIDT…TCRE, NGSH…KTEE, EPAR…TDRP, NTEY…MMIN, LTDE…KPQY, GKQL…GVRE, and QKIE…PESA. N-linked (GlcNAc...) asparagine glycans are attached at residues Asn-74, Asn-110, Asn-230, and Asn-292. A glycan (N-linked (GlcNAc...) asparagine) is linked at Asn-610. A Cell attachment site motif is present at residues 622–624; the sequence is RGD. Residues Asn-681, Asn-775, and Asn-819 are each glycosylated (N-linked (GlcNAc...) asparagine). 2 disordered regions span residues 898–968 and 981–1037; these read LRIT…QNTG and DYEY…KARF. Acidic residues predominate over residues 920–931; the sequence is REEDDESYEDET. Basic and acidic residues predominate over residues 955–964; the sequence is VYERDEDKIR. Residues 984–1003 show a composition bias toward acidic residues; sequence YIPDDQEYDGDDFEDDDEDF. Residues 1008–1023 show a composition bias toward basic residues; that stretch reads SKRVKRAPVPKKKKKE. Basic and acidic residues predominate over residues 1024–1037; sequence GSRSGEPRSDKARF. A helical transmembrane segment spans residues 1154–1174; that stretch reads WLYLLAILIGLAILILLILLL. The Cytoplasmic segment spans residues 1175–1224; the sequence is WRCGFFKRNRPPTEHAELRAEKQPAAHYADTQSRYAPQDQYSQGRHGQML. Residues 1190 to 1224 form a disordered region; that stretch reads AELRAEKQPAAHYADTQSRYAPQDQYSQGRHGQML. Residues 1204 to 1224 are compositionally biased toward polar residues; the sequence is DTQSRYAPQDQYSQGRHGQML.

Belongs to the integrin alpha chain family. As to quaternary structure, heterodimer of an alpha and a beta subunit. Alpha pat-2 associates with beta pat-3.

The protein localises to the membrane. Its function is as follows. Required for muscle development probably through the regulation of the actin-myosin cytoskeleton. During the formation of neuromuscular junctions at the larval stage, negatively regulates membrane protrusion from body wall muscles, probably through lamins such as epi-1, lam-2 and unc-52. Required for distal tip cell migration and dorsal pathfinding. Required for egg-laying. May play a role in cell motility and cell-cell interactions. In Caenorhabditis briggsae, this protein is Integrin alpha pat-2.